The primary structure comprises 972 residues: POM121-like protein 2 (972 aa).

6 disordered regions span residues 1 to 67 (MGSY…PANP), 281 to 302 (LKKAGESPNSHLSVTPSSSGQL), 328 to 359 (TEEDPTLEGQAVPSNQTTEATTGTAGDSIPEM), 406 to 431 (GISSDSNPSIASTQASPSSPTTPVTD), 676 to 726 (LGLS…AIDG), and 953 to 972 (SKTLRNREPGRSRKHHTYKK). The span at 40–57 (RVQHVHRAQPARRHRPAR) shows a compositional bias: basic residues. Composition is skewed to polar residues over residues 287–302 (SPNSHLSVTPSSSGQL) and 339–352 (VPSNQTTEATTGTA). Low complexity predominate over residues 413–431 (PSIASTQASPSSPTTPVTD). Over residues 677-696 (GLSSTNQPPVTSSNSNVTSA) the composition is skewed to polar residues. The segment covering 697–706 (LTSSLGSSPK) has biased composition (low complexity).

The protein belongs to the POM121 family.

The chain is POM121-like protein 2 (Pom121l2) from Mus musculus (Mouse).